A 182-amino-acid polypeptide reads, in one-letter code: Malignant T-cell-amplified sequence 1 homolog (182 aa).

The 80-residue stretch at 93–172 folds into the PUA domain; the sequence is VTMQQVDKGA…IGIETYHFLN (80 aa).

The protein belongs to the MCTS1 family. As to quaternary structure, interacts with DENR.

Its subcellular location is the cytoplasm. Functionally, regulates translation as part of a complex with DENR. Specifically required for translational re-initiation in mRNAs containing upstream open reading frames (uORFs). Not required for standard translational initiation. Regulates expression of a subset of gene products including mbc, InR and EcR. The chain is Malignant T-cell-amplified sequence 1 homolog from Drosophila melanogaster (Fruit fly).